A 250-amino-acid polypeptide reads, in one-letter code: Bacteriorhodopsin-II (250 aa).

Helical transmembrane passes span 14–34 (EGIW…YFMA), 49–69 (VITI…FFGF), 89–109 (YADW…LAGA), 114–134 (MASL…ATLM), 142–162 (AFWT…VVVV), 183–203 (IILV…EGLG), and 210–230 (ETLL…FILL). The residue at position 222 (K222) is an N6-(retinylidene)lysine.

This sequence belongs to the archaeal/bacterial/fungal opsin family. The covalent binding of retinal to the apoprotein, bacterioopsin, generates bacteriorhodopsin.

Its subcellular location is the membrane. Light-driven proton pump. This chain is Bacteriorhodopsin-II (xop1), found in Haloarcula marismortui (strain ATCC 43049 / DSM 3752 / JCM 8966 / VKM B-1809) (Halobacterium marismortui).